The primary structure comprises 410 residues: Multifunctional CCA protein (410 aa).

The ATP site is built by Gly8 and Arg11. Residues Gly8 and Arg11 each contribute to the CTP site. Glu21 and Asp23 together coordinate Mg(2+). Residues Arg91, Arg137, and Arg140 each coordinate ATP. The CTP site is built by Arg91, Arg137, and Arg140. Positions Thr228–Phe329 constitute an HD domain.

This sequence belongs to the tRNA nucleotidyltransferase/poly(A) polymerase family. Bacterial CCA-adding enzyme type 1 subfamily. As to quaternary structure, monomer. Can also form homodimers and oligomers. Requires Mg(2+) as cofactor. Ni(2+) serves as cofactor.

It carries out the reaction a tRNA precursor + 2 CTP + ATP = a tRNA with a 3' CCA end + 3 diphosphate. The enzyme catalyses a tRNA with a 3' CCA end + 2 CTP + ATP = a tRNA with a 3' CCACCA end + 3 diphosphate. Catalyzes the addition and repair of the essential 3'-terminal CCA sequence in tRNAs without using a nucleic acid template. Adds these three nucleotides in the order of C, C, and A to the tRNA nucleotide-73, using CTP and ATP as substrates and producing inorganic pyrophosphate. tRNA 3'-terminal CCA addition is required both for tRNA processing and repair. Also involved in tRNA surveillance by mediating tandem CCA addition to generate a CCACCA at the 3' terminus of unstable tRNAs. While stable tRNAs receive only 3'-terminal CCA, unstable tRNAs are marked with CCACCA and rapidly degraded. This Legionella pneumophila (strain Lens) protein is Multifunctional CCA protein.